Consider the following 1148-residue polypeptide: Phospholipid-transporting ATPase IB (1148 aa).

Residues 1–44 lie on the Cytoplasmic side of the membrane; it reads MSRATSVGDQLEAPARIIYLNQSHLNKFCDNRISTAKYSVLTFL. The residue at position 5 (Thr5) is a Phosphothreonine. A helical membrane pass occupies residues 45–66; sequence PRFLYEQIRRAANAFFLFIALL. Residues 67–71 lie on the Exoplasmic loop side of the membrane; it reads QQIPD. The helical transmembrane segment at 72–94 threads the bilayer; sequence VSPTGRYTTLVPLVIILTIAGIK. Over 95 to 276 the chain is Cytoplasmic; it reads EIIEDFKRHK…SNVEKVTNVQ (182 aa). The chain crosses the membrane as a helical span at residues 277 to 298; sequence ILVLFGILLVMALVSSVGALFW. At 299-323 the chain is on the exoplasmic loop side; sequence NGSHGGKSWYIKKMDTNSDNFGYNL. Residues 324–345 form a helical membrane-spanning segment; it reads LTFIILYNNLIPISLLVTLEVV. Topologically, residues 346 to 837 are cytoplasmic; sequence KYTQALFINW…GAWSYNRVTK (492 aa). Asp388 (4-aspartylphosphate intermediate) is an active-site residue. 12 residues coordinate ATP: Asp388, Lys389, Thr390, Glu488, Phe529, Lys552, Arg585, Thr665, Gly666, Asp667, Arg755, and Lys761. Residue Asp388 coordinates Mg(2+). Thr390 is a binding site for Mg(2+). Asp781 contributes to the Mg(2+) binding site. Positions 784 and 785 each coordinate ATP. Residue Asp785 participates in Mg(2+) binding. Residues 838-858 form a helical membrane-spanning segment; the sequence is CILYCFYKNVVLYIIELWFAF. Residues 859–870 are Exoplasmic loop-facing; the sequence is VNGFSGQILFER. A helical membrane pass occupies residues 871–890; that stretch reads WCIGLYNVIFTALPPFTLGI. Residues 891 to 920 are Cytoplasmic-facing; it reads FERSCTQESMLRFPQLYRITQNAEGFNTKV. A helical membrane pass occupies residues 921–942; that stretch reads FWGHCINALVHSLILFWVPMKA. Over 943–956 the chain is Exoplasmic loop; sequence LEHDTPVTSGHATD. The chain crosses the membrane as a helical span at residues 957–979; it reads YLFVGNIVYTYVVVTVCLKAGLE. Residues 980 to 985 lie on the Cytoplasmic side of the membrane; sequence TTAWTK. The helical transmembrane segment at 986–1006 threads the bilayer; the sequence is FSHLAVWGSMLIWLVFFGVYS. The Exoplasmic loop portion of the chain corresponds to 1007 to 1024; it reads TIWPTIPIAPDMKGQATM. The chain crosses the membrane as a helical span at residues 1025-1049; sequence VLSSAYFWLGLFLVPTACLIEDVAW. The Cytoplasmic segment spans residues 1050–1148; the sequence is RAAKHTCKKT…DTTKENSRKK (99 aa).

The protein belongs to the cation transport ATPase (P-type) (TC 3.A.3) family. Type IV subfamily. As to quaternary structure, component of a P4-ATPase flippase complex which consists of a catalytic alpha subunit and an accessory beta subunit. Interacts with TMEM30A to form a flippase complex. The cofactor is Mg(2+). As to expression, found in testis, heart and brain. Most abundant in testis. Also detected in fetal tissues. Expressed in retinal photoreceptor cells; detected in retina outer nuclear layer and inner segment (at protein level).

The protein resides in the membrane. Its subcellular location is the golgi apparatus membrane. The protein localises to the endosome membrane. It is found in the cell membrane. It localises to the photoreceptor outer segment membrane. The protein resides in the photoreceptor inner segment membrane. It carries out the reaction ATP + H2O + phospholipidSide 1 = ADP + phosphate + phospholipidSide 2.. The enzyme catalyses a 1,2-diacyl-sn-glycero-3-phospho-L-serine(out) + ATP + H2O = a 1,2-diacyl-sn-glycero-3-phospho-L-serine(in) + ADP + phosphate + H(+). The catalysed reaction is a 1,2-diacyl-sn-glycero-3-phosphoethanolamine(in) + ATP + H2O = a 1,2-diacyl-sn-glycero-3-phosphoethanolamine(out) + ADP + phosphate + H(+). In terms of biological role, catalytic component of a P4-ATPase flippase complex which catalyzes the hydrolysis of ATP coupled to the transport of aminophospholipids from the outer to the inner leaflet of various membranes and ensures the maintenance of asymmetric distribution of phospholipids. Able to translocate phosphatidylserine, but not phosphatidylcholine. Phospholipid translocation also seems to be implicated in vesicle formation and in uptake of lipid signaling molecules. Reconstituted to liposomes, the ATP8A2:TMEM30A flippase complex predominantly transports phosphatidylserine (PS) and to a lesser extent phosphatidylethanolamine (PE). Phospholipid translocation is not associated with a countertransport of an inorganic ion or other charged substrate from the cytoplasmic side toward the exoplasm in connection with the phosphorylation from ATP. ATP8A2:TMEM30A may be involved in regulation of neurite outgrowth. Proposed to function in the generation and maintenance of phospholipid asymmetry in photoreceptor disk membranes and neuronal axon membranes. May be involved in vesicle trafficking in neuronal cells. Required for normal visual and auditory function; involved in photoreceptor and inner ear spiral ganglion cell survival. The chain is Phospholipid-transporting ATPase IB from Mus musculus (Mouse).